We begin with the raw amino-acid sequence, 67 residues long: Bowman-Birk type proteinase inhibitor 1 (67 aa).

7 disulfides stabilise this stretch: C5–C59, C6–C21, C9–C55, C11–C19, C29–C36, C33–C48, and C38–C46.

The protein belongs to the Bowman-Birk serine protease inhibitor family. As to quaternary structure, monomer. Although dimerization may occur in solution. As to expression, seed.

Functionally, inhibits trypsin but not chymotrypsin. The inhibitor consists of 2 domains and has 2 sites of interaction with trypsin. The chain is Bowman-Birk type proteinase inhibitor 1 from Dioclea glabra.